A 427-amino-acid chain; its full sequence is L-rhamnose isomerase (427 aa).

Residues histidine 264, aspartate 296, and aspartate 298 each contribute to the Mn(2+) site.

This sequence belongs to the rhamnose isomerase family. The cofactor is Mn(2+).

The protein localises to the cytoplasm. It catalyses the reaction L-rhamnopyranose = L-rhamnulose. It participates in carbohydrate degradation; L-rhamnose degradation; glycerone phosphate from L-rhamnose: step 1/3. In terms of biological role, catalyzes the interconversion of L-rhamnose and L-rhamnulose. The sequence is that of L-rhamnose isomerase from Lactiplantibacillus plantarum (strain ATCC BAA-793 / NCIMB 8826 / WCFS1) (Lactobacillus plantarum).